The chain runs to 402 residues: MLYRLKLLLSGQNTKKERVRAKLEIDISIVFVMLGLLIFGWVMVTSASMVVALDDYNNPYFYSIRQGFFAVIAIFLFLLALLVPTKNYEKNYNAFFFIMLIVLVAVLVPGVGKSVNGARRWIPLIIINIQVAELAKLLAIIFFSGYIAENLPKMTNFKEGILTPITLLGCIAVLLLMQPDFGSTVVISICVMGMLFVSGNKVRWYGLLIGAMLIMATMLVIISPYRMHRITGFLHPWENANGSGYQLVQALIGFGRGGWFGDGLGNGVQKQFFLPEAHTDFITSVIAEEIGVIGLMILLMVYLFIVFRAMNIAKMAFELKRYYQAFLSYGISFWIGFQVFVNIGVNTGLLPTKGLTLPLISYGGSSLLIMCFTLGILVRVDFENKLLADTINPKYIYKKVRK.

The Cytoplasmic segment spans residues 1–24; that stretch reads MLYRLKLLLSGQNTKKERVRAKLE. A helical membrane pass occupies residues 25-45; that stretch reads IDISIVFVMLGLLIFGWVMVT. The Periplasmic segment spans residues 46 to 63; it reads SASMVVALDDYNNPYFYS. Residues 64–84 form a helical membrane-spanning segment; the sequence is IRQGFFAVIAIFLFLLALLVP. Residues 85–91 are Cytoplasmic-facing; that stretch reads TKNYEKN. A helical transmembrane segment spans residues 92–112; that stretch reads YNAFFFIMLIVLVAVLVPGVG. The Periplasmic portion of the chain corresponds to 113–121; that stretch reads KSVNGARRW. Residues 122 to 142 form a helical membrane-spanning segment; the sequence is IPLIIINIQVAELAKLLAIIF. Residues 143–160 are Cytoplasmic-facing; sequence FSGYIAENLPKMTNFKEG. The next 2 helical transmembrane spans lie at 161-181 and 182-202; these read ILTP…QPDF and GSTV…GNKV. A topological domain (cytoplasmic) is located at residue arginine 203. Residues 204–224 form a helical membrane-spanning segment; it reads WYGLLIGAMLIMATMLVIISP. At 225–284 the chain is on the periplasmic side; sequence YRMHRITGFLHPWENANGSGYQLVQALIGFGRGGWFGDGLGNGVQKQFFLPEAHTDFITS. The chain crosses the membrane as a helical span at residues 285-305; sequence VIAEEIGVIGLMILLMVYLFI. Over 306–324 the chain is Cytoplasmic; that stretch reads VFRAMNIAKMAFELKRYYQ. A helical transmembrane segment spans residues 325-345; sequence AFLSYGISFWIGFQVFVNIGV. The Periplasmic segment spans residues 346–357; sequence NTGLLPTKGLTL. A helical membrane pass occupies residues 358–378; sequence PLISYGGSSLLIMCFTLGILV. The Cytoplasmic portion of the chain corresponds to 379–402; sequence RVDFENKLLADTINPKYIYKKVRK.

The protein belongs to the SEDS family. FtsW subfamily.

The protein localises to the cell inner membrane. The enzyme catalyses [GlcNAc-(1-&gt;4)-Mur2Ac(oyl-L-Ala-gamma-D-Glu-L-Lys-D-Ala-D-Ala)](n)-di-trans,octa-cis-undecaprenyl diphosphate + beta-D-GlcNAc-(1-&gt;4)-Mur2Ac(oyl-L-Ala-gamma-D-Glu-L-Lys-D-Ala-D-Ala)-di-trans,octa-cis-undecaprenyl diphosphate = [GlcNAc-(1-&gt;4)-Mur2Ac(oyl-L-Ala-gamma-D-Glu-L-Lys-D-Ala-D-Ala)](n+1)-di-trans,octa-cis-undecaprenyl diphosphate + di-trans,octa-cis-undecaprenyl diphosphate + H(+). Its pathway is cell wall biogenesis; peptidoglycan biosynthesis. Functionally, peptidoglycan polymerase that is essential for cell division. The sequence is that of Probable peptidoglycan glycosyltransferase FtsW from Francisella salina.